We begin with the raw amino-acid sequence, 263 residues long: Aquaglyceroporin (263 aa).

A disordered region spans residues 1–22; that stretch reads MDQFVFSGGSEGGGELGGDRER. The next 6 helical transmembrane spans lie at 41–61, 64–84, 113–133, 157–177, 180–200, and 222–242; these read KYFC…FGLA, GGAQ…ITLF, LCYV…GYGI, VIPT…YGVM, LTVP…GATM, and VAAL…AFLG.

It belongs to the MIP/aquaporin (TC 1.A.8) family. As to quaternary structure, multimer.

It is found in the vacuole membrane. It carries out the reaction H2O(in) = H2O(out). The catalysed reaction is glycerol(in) = glycerol(out). It catalyses the reaction urea(in) = urea(out). In terms of biological role, mediates water and glycerol transport across cell membranes. Permeable to selected sugar alcohols of up to five carbons and urea. Permeable to methylamine/methylammonium. The sequence is that of Aquaglyceroporin from Toxoplasma gondii (strain ATCC 50611 / Me49).